The primary structure comprises 507 residues: Glycerol kinase (507 aa).

Residue T13 participates in ADP binding. T13, T14, and S15 together coordinate ATP. T13 serves as a coordination point for sn-glycerol 3-phosphate. R17 is an ADP binding site. Positions 83, 84, 135, and 245 each coordinate sn-glycerol 3-phosphate. 5 residues coordinate glycerol: R83, E84, Y135, D245, and Q246. 2 residues coordinate ADP: T267 and G310. ATP is bound by residues T267, G310, Q314, and G411. Residues G411 and N415 each contribute to the ADP site.

It belongs to the FGGY kinase family.

It carries out the reaction glycerol + ATP = sn-glycerol 3-phosphate + ADP + H(+). It participates in polyol metabolism; glycerol degradation via glycerol kinase pathway; sn-glycerol 3-phosphate from glycerol: step 1/1. Inhibited by fructose 1,6-bisphosphate (FBP). Key enzyme in the regulation of glycerol uptake and metabolism. Catalyzes the phosphorylation of glycerol to yield sn-glycerol 3-phosphate. In Halorhodospira halophila (strain DSM 244 / SL1) (Ectothiorhodospira halophila (strain DSM 244 / SL1)), this protein is Glycerol kinase.